A 313-amino-acid chain; its full sequence is E3 ubiquitin-protein ligase SGIP1 (313 aa).

Positions 16-65 constitute an F-box domain; it reads REYSKEIPIDLLIEIFSRLSTGDIARCRCVSKIWSSVPRLRDFTELFLKI.

Interacts with SGS3 in cytoplasmic granules.

It is found in the cytoplasmic granule. The enzyme catalyses S-ubiquitinyl-[E2 ubiquitin-conjugating enzyme]-L-cysteine + [acceptor protein]-L-lysine = [E2 ubiquitin-conjugating enzyme]-L-cysteine + N(6)-ubiquitinyl-[acceptor protein]-L-lysine.. The protein operates within protein degradation; proteasomal ubiquitin-dependent pathway. It functions in the pathway protein modification; protein ubiquitination. Its function is as follows. E3 ubiquitin-protein ligase which triggers the ubiquitination and subsequent degradation of SGS3 in response to heat. Involved in the mechanisms necessary for quick response to heat and subsequent heritable transgenerational memory of heat acclimation (global warming) such as early flowering and attenuated immunity; this process includes epigenetic regulation as well as post-transcriptional gene silencing (PTGS). In response to heat, HSFA2 is activated and promotes the expression of REF6 which in turn derepresses HSFA2, thus establishing an inheritable feedback loop able to trigger SGIP1 and subsequent SGIP1-mediated SGS3 degradation; this prevents the biosynthesis of trans-acting siRNA (tasiRNA) and leads to the release of HTT5, which drives early flowering but attenuates immunity. The sequence is that of E3 ubiquitin-protein ligase SGIP1 from Arabidopsis thaliana (Mouse-ear cress).